We begin with the raw amino-acid sequence, 317 residues long: Succinate receptor 1 (317 aa).

At 1–27 (MAQNLSCENWLALENILKKYYLSAFYG) the chain is on the extracellular side. Asn4 carries N-linked (GlcNAc...) asparagine glycosylation. The helical transmembrane segment at 28-48 (IEFIVGMLGNFTVVFGYLFCM) threads the bilayer. At 49 to 55 (KNWNSSN) the chain is on the cytoplasmic side. A helical membrane pass occupies residues 56–76 (VYLFNLSISDLAFLCTLPMLI). The Extracellular segment spans residues 77–99 (RSYATGNWTYGDVLCISNRYVLH). An intrachain disulfide couples Cys91 to Cys168. A helical membrane pass occupies residues 100–120 (ANLYTSILFLTFISIDRYLLM). The Cytoplasmic segment spans residues 121–133 (KFPFREHILQKKE). Residues 134–154 (FAILISLAVWVLVTLEVLPML) traverse the membrane as a helical segment. The Extracellular portion of the chain corresponds to 155–181 (TFITSTPIEKGDSCVDYASSGNPKYSL). The chain crosses the membrane as a helical span at residues 182–202 (IYSLCLTLLGFLIPLSVMCFF). At 203–226 (YYKMVVFLKKRSQQQATVLSLNKP) the chain is on the cytoplasmic side. A helical transmembrane segment spans residues 227–247 (LRLVVLAVVIFSVLFTPYHIM). Residues 248–276 (RNVRIASRLDSWPQGCSQKAIKCLYILTR) are Extracellular-facing. The helical transmembrane segment at 277–297 (PLAFLNSAVNPIFYFLVGDHF) threads the bilayer. Residues 298-317 (RDMLFSKLRQYFKSLTSFRL) are Cytoplasmic-facing.

It belongs to the G-protein coupled receptor 1 family. In terms of tissue distribution, expressed in retina.

The protein resides in the cell membrane. Its function is as follows. G protein-coupled receptor for succinate able to mediate signaling through Gq/GNAQ or Gi/GNAI second messengers depending on the cell type and the processes regulated. Succinate-SUCNR1 signaling serves as a link between metabolic stress, inflammation and energy homeostasisn. In macrophages, plays a range of immune-regulatory roles. During inflammation, succinate-SUCNR1 signaling may act as an anti-inflammatory mediator or boost inflammation depending on the inflammatory status of cells. Hyperpolarizes M2 macrophages versus M1 phenotype through Gq signaling by regulating the transcription of genes involved in immune function. In activated M1 macrophages, plays a pro-inflammatory role in response to LPS. Expressed in dendritic cells, where it is involved in the sensing of immunological danger and enhances immunity. Mediates succinate triggered intracelleular calcium mobilization, induces migratory responses and acts in synergy with Toll-like receptor ligands for the production of proinflammatory cytokines as well as an enhancement of antigen-specific activation of helper T cells. In the small intestine, mediates the activation of tuft cells by dietary succinate and triggers type 2 immunity. In adipocytes, plays an important role in the control of energy metabolism. In response to succinate, controls leptin expression in an AMPK-JNK-CEBPA-dependent as well as circadian clock-regulated manner. In muscle tissue, is expressed in non-muscle cells and coordinates muscle remodeling in response to the succinate produced during exercise training in a paracrine manner. In retina, acts as a mediator of vessel growth during retinal development. In response to succinate, regulates the production of angiogenic factors, including VEGF, by retinal ganglion neurons. This Rattus norvegicus (Rat) protein is Succinate receptor 1 (Sucnr1).